The chain runs to 364 residues: DNA replication and repair protein RecF (364 aa).

33–40 provides a ligand contact to ATP; sequence GENGSGKT.

It belongs to the RecF family.

It is found in the cytoplasm. The RecF protein is involved in DNA metabolism; it is required for DNA replication and normal SOS inducibility. RecF binds preferentially to single-stranded, linear DNA. It also seems to bind ATP. This chain is DNA replication and repair protein RecF, found in Rickettsia felis (strain ATCC VR-1525 / URRWXCal2) (Rickettsia azadi).